Here is a 507-residue protein sequence, read N- to C-terminus: Chromosomal replication initiator protein DnaA (507 aa).

Positions 1 to 72 (MNNYNKIWEI…KKITKLKFEE (72 aa)) are domain I, interacts with DnaA modulators. Residues 72–162 (EKIIIEFVSE…KISFNKYNYG (91 aa)) are domain II. Residues 163 to 384 (NTNPKYSFDN…GALLRLLNYA (222 aa)) form a domain III, AAA+ region region. Positions 207, 209, 210, and 211 each coordinate ATP. A domain IV, binds dsDNA region spans residues 385-507 (QTFGYDIDIN…LELILKKINS (123 aa)).

Belongs to the DnaA family. Oligomerizes as a right-handed, spiral filament on DNA at oriC.

The protein localises to the cytoplasm. Plays an essential role in the initiation and regulation of chromosomal replication. ATP-DnaA binds to the origin of replication (oriC) to initiate formation of the DNA replication initiation complex once per cell cycle. Binds the DnaA box (a 9 base pair repeat at the origin) and separates the double-stranded (ds)DNA. Forms a right-handed helical filament on oriC DNA; dsDNA binds to the exterior of the filament while single-stranded (ss)DNA is stabiized in the filament's interior. The ATP-DnaA-oriC complex binds and stabilizes one strand of the AT-rich DNA unwinding element (DUE), permitting loading of DNA polymerase. After initiation quickly degrades to an ADP-DnaA complex that is not apt for DNA replication. Binds acidic phospholipids. The chain is Chromosomal replication initiator protein DnaA from Onion yellows phytoplasma (strain OY-M).